Reading from the N-terminus, the 391-residue chain is Putative ABC transporter glucose-binding protein TsgA13 (391 aa).

An N-terminal signal peptide occupies residues 1 to 28 (MLDEESSIQRRDVLSALGAAGVTTLAGC). Residues 24–71 (TLAGCTGGDTGDTDDTEASETTASEGTTSGTTTGDVETTDGGGPSEGE) are disordered. Positions 42 to 59 (SETTASEGTTSGTTTGDV) are enriched in low complexity.

It belongs to the BMP lipoprotein family. As to quaternary structure, the complex is composed of two ATP-binding proteins (TsgD13), two transmembrane proteins (TsgB13 and TsgC13) and a solute-binding protein (TsgA13).

In terms of biological role, part of an ABC transporter complex involved in glucose import. This is Putative ABC transporter glucose-binding protein TsgA13 (tsgA13) from Haloferax volcanii (strain ATCC 29605 / DSM 3757 / JCM 8879 / NBRC 14742 / NCIMB 2012 / VKM B-1768 / DS2) (Halobacterium volcanii).